The following is a 443-amino-acid chain: Type I restriction enzyme HindI methylase subunit (443 aa).

S-adenosyl-L-methionine contacts are provided by residues 117–122, 146–148, and Glu-173; these read QYFTPK and SGG.

The protein belongs to the N(4)/N(6)-methyltransferase family. In terms of assembly, the type I restriction/modification system is composed of three polypeptides R, M and S; the restriction enzyme has stoichiometry R(2)M(2)S(1) while the methyltransferase is M(2)S(1).

The catalysed reaction is a 2'-deoxyadenosine in DNA + S-adenosyl-L-methionine = an N(6)-methyl-2'-deoxyadenosine in DNA + S-adenosyl-L-homocysteine + H(+). In terms of biological role, the subtype gamma methyltransferase (M) subunit of a type I restriction enzyme. The M and S subunits together form a methyltransferase (MTase) that methylates adenosines in the sequence 5'-RAACN(5)TAG-3'. Methylation protects against cleavage by HindI. In the presence of the R subunit the complex can also act as an endonuclease, binding to the same target sequence but cutting the DNA some distance from this site. Whether the DNA is cut or modified depends on the methylation state of the target sequence. When the target site is unmodified, the DNA is cut. When the target site is hemimethylated, the complex acts as a maintenance MTase modifying the DNA so that both strands become methylated. After locating a non-methylated recognition site, the enzyme complex serves as a molecular motor that translocates DNA in an ATP-dependent manner until a collision occurs that triggers cleavage. In Haemophilus influenzae (strain ATCC 51907 / DSM 11121 / KW20 / Rd), this protein is Type I restriction enzyme HindI methylase subunit.